The primary structure comprises 263 residues: L-erythrulose-1-phosphate isomerase (263 aa).

His106 serves as the catalytic Electrophile. Glu178 acts as the Proton acceptor in catalysis.

It belongs to the triosephosphate isomerase family.

It catalyses the reaction L-erythrulose 1-phosphate = D-erythrulose 4-phosphate. It functions in the pathway carbohydrate metabolism; L-threitol degradation. Catalyzes the isomerization of L-erythrulose-1P to D-erythrulose-4P. Involved in the degradation pathway of L-threitol, that allows M.smegmatis to grow on this compound as the sole carbon source. This Mycolicibacterium smegmatis (strain ATCC 700084 / mc(2)155) (Mycobacterium smegmatis) protein is L-erythrulose-1-phosphate isomerase.